The following is a 293-amino-acid chain: Fructose-bisphosphate aldolase (293 aa).

Ser-50 contributes to the D-glyceraldehyde 3-phosphate binding site. Asp-85 serves as the catalytic Proton donor. Positions 86, 106, 136, and 178 each coordinate Zn(2+). Gly-179 lines the dihydroxyacetone phosphate pocket. Position 208 (His-208) interacts with Zn(2+). Residues 209 to 211 and 230 to 233 each bind dihydroxyacetone phosphate; these read GGS and NVNT.

Belongs to the class II fructose-bisphosphate aldolase family. Zn(2+) is required as a cofactor.

The enzyme catalyses beta-D-fructose 1,6-bisphosphate = D-glyceraldehyde 3-phosphate + dihydroxyacetone phosphate. It participates in carbohydrate degradation; glycolysis; D-glyceraldehyde 3-phosphate and glycerone phosphate from D-glucose: step 4/4. Functionally, catalyzes the aldol condensation of dihydroxyacetone phosphate (DHAP or glycerone-phosphate) with glyceraldehyde 3-phosphate (G3P) to form fructose 1,6-bisphosphate (FBP) in gluconeogenesis and the reverse reaction in glycolysis. The sequence is that of Fructose-bisphosphate aldolase (fba) from Streptococcus pyogenes serotype M3 (strain ATCC BAA-595 / MGAS315).